The following is a 263-amino-acid chain: MESTLRRTYPHHTWHLVNEGDSGAFVYRLTGHGPELYAKIAPRTPENSAFHLDGEADRLDWLARHGISVPRVVERGADDTTAWLVTEAVPGAAASEEWPEDERAAVVDAIAEMARTLHELPVSECPFDRRLDVTGEARHNVREGLVDLDDLQEEPAGWTGDQLLAELDLTRPEKEDLVVCHGDLCPNNVLLDPETHRITGLIDVGRLRLATCHADLALAARELAIDEDPWFGPAYAERFLERYGAHHVDQEKMAFYQLLDEFF.

Asp183 (proton acceptor) is an active-site residue.

It belongs to the aminoglycoside phosphotransferase family.

The catalysed reaction is kanamycin A + ATP = kanamycin 3'-phosphate + ADP + H(+). Functionally, resistance to kanamycin and structurally-related aminoglycosides, including amikacin. This Streptomyces ribosidificus protein is Aminoglycoside 3'-phosphotransferase (rph).